Here is a 421-residue protein sequence, read N- to C-terminus: ATP-dependent RNA helicase RhlB (421 aa).

Positions 9 to 37 match the Q motif motif; that stretch reads QKFSDFALHPKVVEALEKKGFHNCTPIQA. One can recognise a Helicase ATP-binding domain in the interval 40 to 219; that stretch reads LPLTLAGRDV…FEQMNNAEYI (180 aa). 53-60 serves as a coordination point for ATP; that stretch reads AQTGTGKT. Positions 165–168 match the DEAD box motif; the sequence is DEAD. The 146-residue stretch at 245–390 folds into the Helicase C-terminal domain; it reads RLLQTLIEEE…VSKYNPDALM (146 aa). Residues 395–421 are disordered; that stretch reads KPLRLTRARTGNGPRRTGAPRNRRRSG. Residues 402 to 414 show a composition bias toward low complexity; the sequence is ARTGNGPRRTGAP.

The protein belongs to the DEAD box helicase family. RhlB subfamily. Component of the RNA degradosome, which is a multiprotein complex involved in RNA processing and mRNA degradation.

The protein localises to the cytoplasm. The catalysed reaction is ATP + H2O = ADP + phosphate + H(+). Functionally, DEAD-box RNA helicase involved in RNA degradation. Has RNA-dependent ATPase activity and unwinds double-stranded RNA. The protein is ATP-dependent RNA helicase RhlB of Shigella flexneri serotype 5b (strain 8401).